The chain runs to 849 residues: Villin-1 (849 aa).

Gelsolin-like repeat units lie at residues I30–L107, R147–K213, V262–F335, Q405–F475, and A527–L566. The interval E739 to R849 is disordered. Composition is skewed to low complexity over residues K747–T782 and P791–S823.

It belongs to the villin/gelsolin family. Expressed in roots, young leaves, and inflorescences, mostly in the vasculature of roots, leaves, and filaments of the anthers. Also detected in guard cells.

The protein resides in the cytoplasm. It is found in the cytoskeleton. Functionally, ca(2+)-independent actin-binding protein. Binds actin microfilaments (MFs). Involved in actin filament bundling, severing and capping. Caps the barbed end of actin filaments and protects them from disassembly. Promotes VLN3-mediated MF severing. The chain is Villin-1 from Oryza sativa subsp. japonica (Rice).